A 471-amino-acid chain; its full sequence is Adenosylhomocysteinase (471 aa).

Substrate is bound by residues threonine 60, aspartate 135, and glutamate 196. An NAD(+)-binding site is contributed by 197–199 (TTT). 2 residues coordinate substrate: lysine 226 and aspartate 230. NAD(+) is bound by residues asparagine 231, 260–265 (GYGDVG), glutamate 283, asparagine 318, 339–341 (IGH), and asparagine 387.

The protein belongs to the adenosylhomocysteinase family. Requires NAD(+) as cofactor.

Its subcellular location is the cytoplasm. The catalysed reaction is S-adenosyl-L-homocysteine + H2O = L-homocysteine + adenosine. It functions in the pathway amino-acid biosynthesis; L-homocysteine biosynthesis; L-homocysteine from S-adenosyl-L-homocysteine: step 1/1. Its function is as follows. May play a key role in the regulation of the intracellular concentration of adenosylhomocysteine. The sequence is that of Adenosylhomocysteinase from Chlorobium phaeovibrioides (strain DSM 265 / 1930) (Prosthecochloris vibrioformis (strain DSM 265)).